Reading from the N-terminus, the 175-residue chain is Endoribonuclease YbeY (175 aa).

Zn(2+) contacts are provided by H129, H133, and H139.

It belongs to the endoribonuclease YbeY family. Zn(2+) serves as cofactor.

The protein localises to the cytoplasm. Single strand-specific metallo-endoribonuclease involved in late-stage 70S ribosome quality control and in maturation of the 3' terminus of the 16S rRNA. This Lactobacillus johnsonii (strain CNCM I-12250 / La1 / NCC 533) protein is Endoribonuclease YbeY.